The primary structure comprises 296 residues: Probable endonuclease 4 (296 aa).

Zn(2+) is bound by residues His68, His109, Glu144, Asp178, His181, His213, Asp226, His228, and Glu258.

Belongs to the AP endonuclease 2 family. Zn(2+) serves as cofactor.

The enzyme catalyses Endonucleolytic cleavage to 5'-phosphooligonucleotide end-products.. Functionally, endonuclease IV plays a role in DNA repair. It cleaves phosphodiester bonds at apurinic or apyrimidinic (AP) sites, generating a 3'-hydroxyl group and a 5'-terminal sugar phosphate. This Staphylococcus epidermidis (strain ATCC 35984 / DSM 28319 / BCRC 17069 / CCUG 31568 / BM 3577 / RP62A) protein is Probable endonuclease 4.